The chain runs to 229 residues: Echinolectin 1 (229 aa).

An N-linked (GlcNAc...) asparagine glycan is attached at Asn-94.

The protein localises to the secreted. The sequence is that of Echinolectin 1 from Echinometra lucunter (Rock-boring urchin).